The following is a 353-amino-acid chain: DNA polymerase IV (353 aa).

Positions 14 to 198 (IIHIDMDAFF…MDISKFHGVG (185 aa)) constitute a UmuC domain. Residues D18 and D116 each contribute to the Mg(2+) site. Residue E117 is part of the active site.

It belongs to the DNA polymerase type-Y family. As to quaternary structure, monomer. Mg(2+) serves as cofactor.

It is found in the cytoplasm. It catalyses the reaction DNA(n) + a 2'-deoxyribonucleoside 5'-triphosphate = DNA(n+1) + diphosphate. In terms of biological role, poorly processive, error-prone DNA polymerase involved in untargeted mutagenesis. Copies undamaged DNA at stalled replication forks, which arise in vivo from mismatched or misaligned primer ends. These misaligned primers can be extended by PolIV. Exhibits no 3'-5' exonuclease (proofreading) activity. May be involved in translesional synthesis, in conjunction with the beta clamp from PolIII. The protein is DNA polymerase IV of Streptococcus pneumoniae serotype 4 (strain ATCC BAA-334 / TIGR4).